Reading from the N-terminus, the 317-residue chain is Ventral anterior homeobox 1 (317 aa).

Residues 1–62 (MEVRYSQDSE…CEKSRASSGD (62 aa)) form a disordered region. Basic and acidic residues predominate over residues 18-27 (GLKEGKEGKD). A DNA-binding region (homeobox) is located at residues 92–151 (PKRTRTSFTAEQLYRLEMEFQRCQYVVGRERTELARQLNLSETQVKVWFQNRRTKQKKDQ). A disordered region spans residues 203-248 (GPSLGITANGGSSSSSRSSAGSSGTAGGSPPLPTVTSSGTVTGLQG). The segment covering 212 to 225 (GGSSSSSRSSAGSS) has biased composition (low complexity). Residues 236–247 (TVTSSGTVTGLQ) are compositionally biased toward polar residues.

This sequence belongs to the EMX homeobox family. Expressed in the anterior neural keel and later in the preoptic area and optic stalk.

Its subcellular location is the nucleus. Transcription factor that is required for closure of the choroid fissure and together with Vax2 is required for optic nerve differentiation and to limit retinal development to the optic cup. The chain is Ventral anterior homeobox 1 (vax1) from Danio rerio (Zebrafish).